We begin with the raw amino-acid sequence, 332 residues long: Beta-hexosaminidase (332 aa).

Substrate contacts are provided by residues Asp62, Arg70, Arg131, and 161-162 (KH). The Proton donor/acceptor role is filled by His174. The active-site Nucleophile is Asp244.

It belongs to the glycosyl hydrolase 3 family. NagZ subfamily.

Its subcellular location is the cytoplasm. It carries out the reaction Hydrolysis of terminal non-reducing N-acetyl-D-hexosamine residues in N-acetyl-beta-D-hexosaminides.. It functions in the pathway cell wall biogenesis; peptidoglycan recycling. Plays a role in peptidoglycan recycling by cleaving the terminal beta-1,4-linked N-acetylglucosamine (GlcNAc) from peptide-linked peptidoglycan fragments, giving rise to free GlcNAc, anhydro-N-acetylmuramic acid and anhydro-N-acetylmuramic acid-linked peptides. This chain is Beta-hexosaminidase, found in Pseudomonas aeruginosa (strain LESB58).